A 292-amino-acid polypeptide reads, in one-letter code: tRNA pseudouridine synthase B (292 aa).

Residue D38 is the Nucleophile of the active site.

The protein belongs to the pseudouridine synthase TruB family. Type 1 subfamily.

It catalyses the reaction uridine(55) in tRNA = pseudouridine(55) in tRNA. Responsible for synthesis of pseudouridine from uracil-55 in the psi GC loop of transfer RNAs. This is tRNA pseudouridine synthase B from Streptococcus gordonii (strain Challis / ATCC 35105 / BCRC 15272 / CH1 / DL1 / V288).